The following is a 440-amino-acid chain: tRNA-2-methylthio-N(6)-dimethylallyladenosine synthase (440 aa).

The MTTase N-terminal domain maps to Lys3–Ala119. [4Fe-4S] cluster-binding residues include Cys12, Cys48, Cys82, Cys158, Cys162, and Cys165. In terms of domain architecture, Radical SAM core spans Arg144–Glu374. Positions Lys377 to Glu437 constitute a TRAM domain.

The protein belongs to the methylthiotransferase family. MiaB subfamily. As to quaternary structure, monomer. The cofactor is [4Fe-4S] cluster.

It localises to the cytoplasm. It carries out the reaction N(6)-dimethylallyladenosine(37) in tRNA + (sulfur carrier)-SH + AH2 + 2 S-adenosyl-L-methionine = 2-methylsulfanyl-N(6)-dimethylallyladenosine(37) in tRNA + (sulfur carrier)-H + 5'-deoxyadenosine + L-methionine + A + S-adenosyl-L-homocysteine + 2 H(+). In terms of biological role, catalyzes the methylthiolation of N6-(dimethylallyl)adenosine (i(6)A), leading to the formation of 2-methylthio-N6-(dimethylallyl)adenosine (ms(2)i(6)A) at position 37 in tRNAs that read codons beginning with uridine. This Aquifex aeolicus (strain VF5) protein is tRNA-2-methylthio-N(6)-dimethylallyladenosine synthase.